The following is a 293-amino-acid chain: 4-diphosphocytidyl-2-C-methyl-D-erythritol kinase (293 aa).

Lys-10 is a catalytic residue. 96-106 (PVASGIGGGSS) contributes to the ATP binding site. Residue Asp-138 is part of the active site.

The protein belongs to the GHMP kinase family. IspE subfamily.

The catalysed reaction is 4-CDP-2-C-methyl-D-erythritol + ATP = 4-CDP-2-C-methyl-D-erythritol 2-phosphate + ADP + H(+). Its pathway is isoprenoid biosynthesis; isopentenyl diphosphate biosynthesis via DXP pathway; isopentenyl diphosphate from 1-deoxy-D-xylulose 5-phosphate: step 3/6. In terms of biological role, catalyzes the phosphorylation of the position 2 hydroxy group of 4-diphosphocytidyl-2C-methyl-D-erythritol. This Chelativorans sp. (strain BNC1) protein is 4-diphosphocytidyl-2-C-methyl-D-erythritol kinase.